Reading from the N-terminus, the 227-residue chain is Cytidylate kinase (227 aa).

11 to 19 (GPSGAGKGT) contacts ATP.

Belongs to the cytidylate kinase family. Type 1 subfamily.

Its subcellular location is the cytoplasm. It catalyses the reaction CMP + ATP = CDP + ADP. It carries out the reaction dCMP + ATP = dCDP + ADP. The chain is Cytidylate kinase from Pasteurella multocida (strain Pm70).